The sequence spans 299 residues: MELLSALSLGELALSFSRVPLFPVFDLSYFIVSILYLKYEPGAVELSRRHPIASWLCAMLHCFGSYILADLLLGEPLIDYFSNNSSILLASAVWYLIFFCPLDLFYKCVCFLPVKLIFVAMKEVVRVRKIAVGIHHAHHHYHHGWFVMIATGWVKGSGVALMSNFEQLLRGVWKPETNEILHMSFPTKASLYGAILFTLQQTRWLPVSKASLIFIFTLFMVSCKVFLTATHSHSSPFDALEGYICPVLFGSACGGDHHHDNHGGSHSGGGPGAQHSAMPAKSKEELSEGSRKKKAKKAD.

Residues 1–18 (MELLSALSLGELALSFSR) are Lumenal-facing. A helical membrane pass occupies residues 19–39 (VPLFPVFDLSYFIVSILYLKY). The Cytoplasmic segment spans residues 40–51 (EPGAVELSRRHP). A helical transmembrane segment spans residues 52 to 72 (IASWLCAMLHCFGSYILADLL). Residues 73-85 (LGEPLIDYFSNNS) are Lumenal-facing. Residue G74 coordinates Ca(2+). Residues 86–106 (SILLASAVWYLIFFCPLDLFY) form a helical membrane-spanning segment. Topologically, residues 107 to 144 (KCVCFLPVKLIFVAMKEVVRVRKIAVGIHHAHHHYHHG) are cytoplasmic. 2 residues coordinate a 1,2-diacyl-sn-glycero-3-phospho-(1D-myo-inositol-4,5-bisphosphate): K122 and R126. The chain crosses the membrane as a helical span at residues 145–165 (WFVMIATGWVKGSGVALMSNF). Topologically, residues 166–178 (EQLLRGVWKPETN) are lumenal. Residues 179–199 (EILHMSFPTKASLYGAILFTL) form a helical membrane-spanning segment. Over 200-209 (QQTRWLPVSK) the chain is Cytoplasmic. Residues 210–230 (ASLIFIFTLFMVSCKVFLTAT) traverse the membrane as a helical segment. The Lumenal segment spans residues 231–234 (HSHS). A helical membrane pass occupies residues 235–255 (SPFDALEGYICPVLFGSACGG). Topologically, residues 256–299 (DHHHDNHGGSHSGGGPGAQHSAMPAKSKEELSEGSRKKKAKKAD) are cytoplasmic. The segment at 260–299 (DNHGGSHSGGGPGAQHSAMPAKSKEELSEGSRKKKAKKAD) is disordered. Residues 281-290 (KSKEELSEGS) are compositionally biased toward basic and acidic residues.

It belongs to the TMEM38 family. Homotrimer; conformation seems to be controled by binding to diacylglycerol (DAG).

Its subcellular location is the sarcoplasmic reticulum membrane. It localises to the nucleus membrane. The catalysed reaction is K(+)(in) = K(+)(out). Its activity is regulated as follows. Channel activity is activated by a change of voltage within the sarcoplasmic reticulum lumen and blocked by luminal high Ca(2+) levels. Intracellular monovalent cation channel required for maintenance of rapid intracellular calcium release. Acts as a potassium counter-ion channel that functions in synchronization with calcium release from intracellular stores. Opened by a change of voltage within the sarcoplasmic reticulum lumen. The chain is Trimeric intracellular cation channel type A from Homo sapiens (Human).